The chain runs to 237 residues: CDP-diacylglycerol--serine O-phosphatidyltransferase (237 aa).

Transmembrane regions (helical) follow at residues 3–23 (INPL…LGMM), 25–45 (IFYA…ASLI), 73–93 (VIAF…YNFG), 95–115 (IGMA…ARFN), 124–144 (YSFI…CVLL), 150–170 (FLEG…GVLM), 184–204 (WNLK…VRPL), and 207–227 (LSVF…FLMV).

This sequence belongs to the CDP-alcohol phosphatidyltransferase class-I family.

The protein localises to the cell membrane. It catalyses the reaction a CDP-1,2-diacyl-sn-glycerol + L-serine = a 1,2-diacyl-sn-glycero-3-phospho-L-serine + CMP + H(+). This chain is CDP-diacylglycerol--serine O-phosphatidyltransferase (pssA), found in Helicobacter pylori (strain ATCC 700392 / 26695) (Campylobacter pylori).